The sequence spans 116 residues: Iron-sulfur cluster insertion protein ErpA (116 aa).

Residues cysteine 44, cysteine 108, and cysteine 110 each contribute to the iron-sulfur cluster site.

This sequence belongs to the HesB/IscA family. As to quaternary structure, homodimer. Requires iron-sulfur cluster as cofactor.

In terms of biological role, required for insertion of 4Fe-4S clusters for at least IspG. In Shewanella sp. (strain ANA-3), this protein is Iron-sulfur cluster insertion protein ErpA.